A 437-amino-acid polypeptide reads, in one-letter code: UPF0597 protein Shal_0864 (437 aa).

It belongs to the UPF0597 family.

The protein is UPF0597 protein Shal_0864 of Shewanella halifaxensis (strain HAW-EB4).